Here is a 376-residue protein sequence, read N- to C-terminus: Cobalt-precorrin-5B C(1)-methyltransferase (376 aa).

It belongs to the CbiD family.

The catalysed reaction is Co-precorrin-5B + S-adenosyl-L-methionine = Co-precorrin-6A + S-adenosyl-L-homocysteine. It functions in the pathway cofactor biosynthesis; adenosylcobalamin biosynthesis; cob(II)yrinate a,c-diamide from sirohydrochlorin (anaerobic route): step 6/10. Its function is as follows. Catalyzes the methylation of C-1 in cobalt-precorrin-5B to form cobalt-precorrin-6A. The polypeptide is Cobalt-precorrin-5B C(1)-methyltransferase (Bradyrhizobium sp. (strain BTAi1 / ATCC BAA-1182)).